A 540-amino-acid polypeptide reads, in one-letter code: Phosphomethylpyrimidine synthase (540 aa).

Substrate contacts are provided by residues asparagine 143, methionine 172, tyrosine 201, histidine 237, 257–259 (SRG), 298–301 (DGLR), and glutamate 337. Histidine 341 provides a ligand contact to Zn(2+). Substrate is bound at residue tyrosine 364. Histidine 405 serves as a coordination point for Zn(2+). 3 residues coordinate [4Fe-4S] cluster: cysteine 485, cysteine 488, and cysteine 493.

This sequence belongs to the ThiC family. [4Fe-4S] cluster is required as a cofactor.

The enzyme catalyses 5-amino-1-(5-phospho-beta-D-ribosyl)imidazole + S-adenosyl-L-methionine = 4-amino-2-methyl-5-(phosphooxymethyl)pyrimidine + CO + 5'-deoxyadenosine + formate + L-methionine + 3 H(+). Its pathway is cofactor biosynthesis; thiamine diphosphate biosynthesis. Catalyzes the synthesis of the hydroxymethylpyrimidine phosphate (HMP-P) moiety of thiamine from aminoimidazole ribotide (AIR) in a radical S-adenosyl-L-methionine (SAM)-dependent reaction. This Mycobacterium avium (strain 104) protein is Phosphomethylpyrimidine synthase.